The following is an 82-amino-acid chain: Delta-actitoxin-Aeq2b 2 (82 aa).

The first 19 residues, 1 to 19 (MNRLMILVFAAVFLALASA), serve as a signal peptide directing secretion. Residues 20–26 (DEDVDIA) constitute a propeptide that is removed on maturation. Disulfide bonds link C32-C79, C34-C69, and C62-C80.

It belongs to the sea anemone sodium channel inhibitory toxin family. Type I subfamily.

It is found in the secreted. The protein localises to the nematocyst. Its function is as follows. Binds specifically to voltage-gated sodium channels (Nav), thereby delaying their inactivation during signal transduction. Causes death to crabs. This chain is Delta-actitoxin-Aeq2b 2, found in Actinia equina (Beadlet anemone).